A 703-amino-acid polypeptide reads, in one-letter code: Protein teflon (703 aa).

Residues 32-55 (MLCHFCKDIFTHLPEFMRHLQWSH) form a C2H2-type 1 zinc finger. Disordered regions lie at residues 78–111 (SSED…PGSS), 140–161 (EQSY…ARKP), 205–239 (NDVS…MPSL), and 339–434 (SQQP…SKLE). Residues 84-94 (QSQANSCSSGD) show a composition bias toward polar residues. Residues 148–161 (PDSRTEGFRCARKP) are compositionally biased toward basic and acidic residues. 2 stretches are compositionally biased toward polar residues: residues 339 to 352 (SQQP…NNAV) and 364 to 373 (SLTVISSSPI). 2 C2H2-type zinc fingers span residues 649–672 (YFCE…QSVH) and 677–700 (FTCS…KTVH).

This sequence belongs to the Teflon family.

It is found in the nucleus. It localises to the chromosome. Functionally, specifically required in males for proper segregation of autosomal bivalents at meiosis I. Expression is required in the male germ line prior to spermatocyte stage S4. May have a role as a bridging molecule maintaining adhesion to hold autosome bivalents together via heterochromatic connections. This is Protein teflon from Drosophila persimilis (Fruit fly).